We begin with the raw amino-acid sequence, 817 residues long: Dolichyl-phosphate-mannose--protein mannosyltransferase 1 (817 aa).

At serine 2 the chain carries N-acetylserine. Residues 2–50 (SEEKTYKRVEQDDPVPELDIKQGPVRPFIVTDPSAELASLRTMVTLKEK) are Cytoplasmic-facing. The helical transmembrane segment at 51–70 (LLVACLAVFTAVIRLHGLAW) threads the bilayer. Residues 71 to 135 (PDSVVFDEVH…DSFPSTTPYV (65 aa)) are Lumenal-facing. Residues 136–154 (LMRFFSASLGALTVILMYM) traverse the membrane as a helical segment. Residues 155–179 (TLRYSGVRMWVALMSAICFAVENSY) lie on the Cytoplasmic side of the membrane. A helical membrane pass occupies residues 180 to 200 (VTISRYILLDAPLMFFIAAAV). Over 201–234 (YSFKKYEMYPANSLNAYKSLLATGIALGMASSSK) the chain is Lumenal. A helical transmembrane segment spans residues 235–259 (WVGLFTVTWVGLLCIWRLWFMIGDL). Over 260–273 (TKSSKSIFKVAFAK) the chain is Cytoplasmic. The helical transmembrane segment at 274–291 (LAFLLGVPFALYLVFFYI) threads the bilayer. The Lumenal portion of the chain corresponds to 292 to 584 (HFQSLTLDGD…GENNRNVYLL (293 aa)). MIR domains are found at residues 324-378 (VADV…LELY), 388-448 (FQNL…VEID), and 459-514 (ERVI…VENN). N-linked (GlcNAc...) asparagine glycosylation is found at asparagine 390 and asparagine 513. A helical transmembrane segment spans residues 585–605 (GNAIVWWAVTAFIGIFGLIVI). The Cytoplasmic portion of the chain corresponds to 606–685 (TELFSWQLGK…SYVFRSKRQM (80 aa)). Residues 686–710 (GYAVVITFLAASVYFFKSFSPIIYG) form a helical membrane-spanning segment. At 711-817 (TPWTQELCQK…LKVEKRAVLE (107 aa)) the chain is on the lumenal side. The N-linked (GlcNAc...) asparagine glycan is linked to asparagine 743.

This sequence belongs to the glycosyltransferase 39 family. PMT1 and PMT2 form a functional heterodimer. The complex interacts with endoplasmic reticulum proteins EMP24, ERV25, ERP1, ERP2, CDC48, HRD1, USA1, YOS9, ERO1, PDI1, UBR1, Cue4, DFM1 and TED1. Forms also a minor complex with PMT3.

The protein resides in the endoplasmic reticulum membrane. It carries out the reaction a di-trans,poly-cis-dolichyl beta-D-mannosyl phosphate + L-seryl-[protein] = 3-O-(alpha-D-mannosyl)-L-seryl-[protein] + a di-trans,poly-cis-dolichyl phosphate + H(+). The catalysed reaction is a di-trans,poly-cis-dolichyl beta-D-mannosyl phosphate + L-threonyl-[protein] = 3-O-(alpha-D-mannosyl)-L-threonyl-[protein] + a di-trans,poly-cis-dolichyl phosphate + H(+). It participates in protein modification; protein glycosylation. In terms of biological role, protein O-mannosyltransferase involved in O-glycosylation which is essential for cell wall rigidity. Forms a heterodimeric complex with PMT2 and more rarely with PMT3 to transfer mannose from Dol-P-mannose to Ser or Thr residues on proteins. The PMT1-PMT2 complex participates in oxidative protein folding, ER-associated protein degradation (ERAD), as well as ER export. Required for incorporation of proteins in the cell wall. The polypeptide is Dolichyl-phosphate-mannose--protein mannosyltransferase 1 (Saccharomyces cerevisiae (strain ATCC 204508 / S288c) (Baker's yeast)).